Consider the following 287-residue polypeptide: Phosphatidylserine decarboxylase proenzyme (287 aa).

Active-site charge relay system; for autoendoproteolytic cleavage activity residues include Asp-89, His-146, and Ser-252. Ser-252 acts as the Schiff-base intermediate with substrate; via pyruvic acid; for decarboxylase activity in catalysis. Ser-252 is subject to Pyruvic acid (Ser); by autocatalysis.

The protein belongs to the phosphatidylserine decarboxylase family. PSD-B subfamily. Prokaryotic type I sub-subfamily. As to quaternary structure, heterodimer of a large membrane-associated beta subunit and a small pyruvoyl-containing alpha subunit. The cofactor is pyruvate. Post-translationally, is synthesized initially as an inactive proenzyme. Formation of the active enzyme involves a self-maturation process in which the active site pyruvoyl group is generated from an internal serine residue via an autocatalytic post-translational modification. Two non-identical subunits are generated from the proenzyme in this reaction, and the pyruvate is formed at the N-terminus of the alpha chain, which is derived from the carboxyl end of the proenzyme. The autoendoproteolytic cleavage occurs by a canonical serine protease mechanism, in which the side chain hydroxyl group of the serine supplies its oxygen atom to form the C-terminus of the beta chain, while the remainder of the serine residue undergoes an oxidative deamination to produce ammonia and the pyruvoyl prosthetic group on the alpha chain. During this reaction, the Ser that is part of the protease active site of the proenzyme becomes the pyruvoyl prosthetic group, which constitutes an essential element of the active site of the mature decarboxylase.

Its subcellular location is the cell membrane. The catalysed reaction is a 1,2-diacyl-sn-glycero-3-phospho-L-serine + H(+) = a 1,2-diacyl-sn-glycero-3-phosphoethanolamine + CO2. It functions in the pathway phospholipid metabolism; phosphatidylethanolamine biosynthesis; phosphatidylethanolamine from CDP-diacylglycerol: step 2/2. Its function is as follows. Catalyzes the formation of phosphatidylethanolamine (PtdEtn) from phosphatidylserine (PtdSer). The sequence is that of Phosphatidylserine decarboxylase proenzyme from Shewanella pealeana (strain ATCC 700345 / ANG-SQ1).